A 1425-amino-acid polypeptide reads, in one-letter code: Protein NAP1 (1425 aa).

Polar residues-rich tracts occupy residues 1 to 20 (MANS…PTSV), 1299 to 1312 (TPLS…SPSV), and 1320 to 1329 (SMKNSTTPQR). Disordered regions lie at residues 1-24 (MANS…RSRE) and 1299-1425 (TPLS…KQHN). The span at 1362-1405 (SETGNSRNNENNNNNKQRGSSRRSGPLDYSSSHKGGSGSNSTGP) shows a compositional bias: low complexity.

The protein belongs to the HEM-1/HEM-2 family. As to quaternary structure, binds PIR. As to expression, expressed in roots, root hairs, hypocotyls, cotyledons, stems, leaves, trichomes, and flowers.

Functionally, involved in regulation of actin and microtubule organization. Part of a WAVE complex that activates the Arp2/3 complex. The chain is Protein NAP1 (NAP1) from Arabidopsis thaliana (Mouse-ear cress).